Reading from the N-terminus, the 448-residue chain is Oxysterol-binding protein homolog 6 (448 aa).

The disordered stretch occupies residues 1–42 (MGSKKLTVGSDSHRLSKSSFSSNKSSHSATKDQPIDTDDIDE). At S16 the chain carries Phosphoserine. The segment covering 17 to 28 (KSSFSSNKSSHS) has biased composition (low complexity). An OSBP-related domain (ORD) region spans residues 54–391 (IISQLRPGCD…PGEDLDYCIY (338 aa)). A 1,2-diacyl-sn-glycero-3-phospho-(1D-myo-inositol 4-phosphate) is bound by residues 64-69 (LTRITL), 126-129 (KPLN), and 157-158 (HH). Residues 64 to 69 (LTRITL) and N129 each bind a 1,2-diacyl-sn-glycero-3-phospho-L-serine. Residue S183 participates in a 1,2-diacyl-sn-glycero-3-phospho-L-serine binding. K351, E355, and R359 together coordinate a 1,2-diacyl-sn-glycero-3-phospho-(1D-myo-inositol 4-phosphate).

The protein belongs to the OSBP family. Interacts with the AAA ATPase VPS4; regulates OSH6 membrane association. VPS4 is required for membrane dissociation of OSH6.

The protein resides in the cytoplasm. Its subcellular location is the cell membrane. It is found in the endoplasmic reticulum membrane. It carries out the reaction a 1,2-diacyl-sn-glycero-3-phospho-L-serine(in) = a 1,2-diacyl-sn-glycero-3-phospho-L-serine(out). In terms of biological role, lipid transport protein (LTP) involved in non-vesicular transfer of lipids between membranes. Functions in phosphoinositide-coupled directional transport of various lipids by carrying the lipid molecule in a hydrophobic pocket and transferring it between membranes through the cytosol. Involved in maintenance of intracellular sterol distribution and homeostasis. Catalyzes the lipid countertransport between the endoplasmic reticulum (ER) and the plasma membrane (PM). Specifically exchanges phosphatidylserine (PS) with phosphatidylinositol 4-phosphate (PI4P), delivering phosphatidylserine to the PM in exchange for PI4P, which is delivered to the ER-localized PI4P phosphatase SAC1 for degradation. Thus, by maintaining a PI4P gradient at the ER/PM interface, SAC1 drives PS transport. Binds phosphatidylserine and PI4P in a mutually exclusive manner. Also binds phosphatidic acid (PA). This Saccharomyces cerevisiae (strain ATCC 204508 / S288c) (Baker's yeast) protein is Oxysterol-binding protein homolog 6.